Reading from the N-terminus, the 113-residue chain is MKITLSKRIGLLAILLPCALALSTTVHAETNKLVIESGDSAQSRQHAAMEKEQWNDTRNLRQKVNKRTEKEWDKADAAFDNRDKCEQSANINAYWEPNTLRCLDRRTGRVITP.

A signal peptide spans 1–28 (MKITLSKRIGLLAILLPCALALSTTVHA).

Belongs to the UPF0482 family.

This Escherichia coli O8 (strain IAI1) protein is UPF0482 protein YnfB.